The sequence spans 336 residues: Phospholipase A1 (336 aa).

Positions 1–27 (MEENMNLKYLLLFVYFVQVLNCCYGHG) are cleaved as a signal peptide. Positions 28 to 36 (DPLSYELDR) are excised as a propeptide. A disulfide bridge connects residues C40 and C123. Catalysis depends on S173, which acts as the Nucleophile. D201 functions as the Charge relay system in the catalytic mechanism. 2 cysteine pairs are disulfide-bonded: C212–C217 and C255–C263. H265 (charge relay system) is an active-site residue. 3 disulfide bridges follow: C280–C304, C281–C329, and C297–C302.

Belongs to the AB hydrolase superfamily. Lipase family. Expressed by the venom gland.

Its subcellular location is the secreted. The catalysed reaction is a 1,2-diacyl-sn-glycero-3-phosphocholine + H2O = a 2-acyl-sn-glycero-3-phosphocholine + a fatty acid + H(+). Functionally, catalyzes the hydrolysis of phosphatidylcholine with phospholipase A1 activity. Induces hemolytic activity. Acts as an allergen. This chain is Phospholipase A1, found in Vespula vulgaris (Yellow jacket).